A 417-amino-acid chain; its full sequence is Phosphoribosylamine--glycine ligase (417 aa).

The 200-residue stretch at 108–307 folds into the ATP-grasp domain; that stretch reads KRIMDEAGVP…LSTLLFAAAT (200 aa). Residue 134 to 188 participates in ATP binding; that stretch reads LDEFGAPYVVKADGLAAGKGVIVTEDRAAALAHAARYLTHGSVLVEEFLDGEEVS. Residues E277 and N279 each coordinate Mg(2+).

This sequence belongs to the GARS family. It depends on Mg(2+) as a cofactor. Mn(2+) is required as a cofactor.

It carries out the reaction 5-phospho-beta-D-ribosylamine + glycine + ATP = N(1)-(5-phospho-beta-D-ribosyl)glycinamide + ADP + phosphate + H(+). It functions in the pathway purine metabolism; IMP biosynthesis via de novo pathway; N(1)-(5-phospho-D-ribosyl)glycinamide from 5-phospho-alpha-D-ribose 1-diphosphate: step 2/2. This chain is Phosphoribosylamine--glycine ligase, found in Leifsonia xyli subsp. xyli (strain CTCB07).